The sequence spans 27 residues: FWGAVWKILSKVLPHIPGTVKWLQEKV.

As to expression, expressed by the venom gland.

It is found in the secreted. Antimicrobial peptide forming an alpha-helix in watery and membraneous environments, enabling it to perforate membranes. Active against Gram-negative bacteria E.coli DH5alpha (MIC=5 uM), E.coli MH1 (MIC=0.6 uM) and P.aeruginosa PAO1 (MIC=10 uM) and against Gram-positive bacteria B.subtilis VKM B-501 (MIC=0.6 uM) and A.globiformis VKM Ac-1112 (MIC=0.2 uM). Has cytolytic and hemolytic activity. The sequence is that of M-ectatotoxin-Eb2a from Ectatomma brunneum (Ant).